A 370-amino-acid polypeptide reads, in one-letter code: Histidinol-phosphate aminotransferase 1 (370 aa).

Residue Lys-222 is modified to N6-(pyridoxal phosphate)lysine.

The protein belongs to the class-II pyridoxal-phosphate-dependent aminotransferase family. Histidinol-phosphate aminotransferase subfamily. In terms of assembly, homodimer. Pyridoxal 5'-phosphate serves as cofactor.

The catalysed reaction is L-histidinol phosphate + 2-oxoglutarate = 3-(imidazol-4-yl)-2-oxopropyl phosphate + L-glutamate. The protein operates within amino-acid biosynthesis; L-histidine biosynthesis; L-histidine from 5-phospho-alpha-D-ribose 1-diphosphate: step 7/9. The protein is Histidinol-phosphate aminotransferase 1 of Bacillus cereus (strain ATCC 10987 / NRS 248).